We begin with the raw amino-acid sequence, 1505 residues long: ABC transporter C family member 13 (1505 aa).

Helical transmembrane passes span 11 to 31 (EAAA…LLLL), 54 to 68 (AVDG…VGAW), 71 to 91 (AALA…SYEV), 102 to 122 (ALLL…LAMQ), 131 to 151 (FPVL…GIAY), 171 to 191 (MVAN…GVMG), 313 to 333 (AFAA…SYFV), 336 to 356 (LSGK…FFVA), 367 to 387 (WYLG…AMVY), 421 to 441 (AWYF…LAIL), 447 to 467 (IAMV…VPVA), and 534 to 554 (FVFW…CILL). The region spanning 314–589 (FAAVNTIVSY…FPDLISMIAQ (276 aa)) is the ABC transmembrane type-1 1 domain. The 224-residue stretch at 623 to 846 (ININDATFSW…GTDFNALVCA (224 aa)) folds into the ABC transporter 1 domain. 658–665 (GVIGSGKS) serves as a coordination point for ATP. Residues 881-897 (DNLKNKVSNNEKPSSTR) are compositionally biased toward polar residues. The interval 881-919 (DNLKNKVSNNEKPSSTRGIKEKKKKPEERKKKRSVQEEE) is disordered. Residues 904–919 (KKPEERKKKRSVQEEE) show a composition bias toward basic and acidic residues. The next 6 membrane-spanning stretches (helical) occupy residues 940–960 (GTLI…QIAS), 980–1000 (SVVL…FVFV), 1055–1077 (IAFR…AVMS), 1081–1103 (WQVL…YYIA), 1149–1169 (LLDC…WLCL), and 1174–1194 (LSTF…PGTI). The region spanning 945–1215 (LIILAQTMFQ…GLNLNARMSR (271 aa)) is the ABC transmembrane type-1 2 domain. The region spanning 1262-1496 (IELVDLKVRY…KSSMFMQLVS (235 aa)) is the ABC transporter 2 domain. 1296–1303 (GRTGSGKS) serves as a coordination point for ATP.

Belongs to the ABC transporter superfamily. ABCC family. Conjugate transporter (TC 3.A.1.208) subfamily.

The protein resides in the membrane. Its function is as follows. ABC transporter that may affect phytic acid transport and compartmentalization. May function directly or indirectly in removing phytic acid from the cytosol or in vesicle trafficking. Required for phytic acid accumulation in developing seeds. Phytic acid is the primary storage form of phosphorus in cereal grains and other plant seeds. This is ABC transporter C family member 13 from Oryza sativa subsp. indica (Rice).